Here is a 700-residue protein sequence, read N- to C-terminus: Peroxisomal acyl-coenzyme A oxidase 1 (700 aa).

FAD-binding positions include Thr147, Gly186, and 412–417; that span reads CGGHGY. Glu437 serves as the catalytic Proton acceptor. A Microbody targeting signal motif is present at residues 698 to 700; the sequence is SKL.

Belongs to the acyl-CoA oxidase family. FAD is required as a cofactor.

The protein localises to the peroxisome. The catalysed reaction is a 2,3-saturated acyl-CoA + O2 = a (2E)-enoyl-CoA + H2O2. Catalyzes the desaturation of acyl-CoAs to 2-trans-enoyl-CoAs. First enzyme of the fatty acid beta-oxidation pathway. The sequence is that of Peroxisomal acyl-coenzyme A oxidase 1 (acox1) from Dictyostelium discoideum (Social amoeba).